We begin with the raw amino-acid sequence, 364 residues long: Phospho-N-acetylmuramoyl-pentapeptide-transferase (364 aa).

The next 10 helical transmembrane spans lie at 18-38 (SLLILLILLLGLLCLGFAQIL), 48-68 (LFPLAVSAICSAILGYVVVPV), 91-111 (GTPTMGGIFFVPVAVIIALIW), 114-134 (LDPAVLAVSIVTLAYMGIGWI), 154-174 (LILQIAIAVGFCIWTFLTQSA), 183-203 (GQIILPLGLFFWIIAGFVLVA), 214-234 (VDGLAGGTGSLAFLGLAALMA), 237-257 (NPGLMIFCACMSGGCLGFIVH), 280-300 (AIGILSGHVWGLFLVSGIFFV), and 343-363 (TQIVGLFYLINAGLAVLAVIS).

This sequence belongs to the glycosyltransferase 4 family. MraY subfamily. The cofactor is Mg(2+).

The protein resides in the cell inner membrane. The catalysed reaction is UDP-N-acetyl-alpha-D-muramoyl-L-alanyl-gamma-D-glutamyl-meso-2,6-diaminopimeloyl-D-alanyl-D-alanine + di-trans,octa-cis-undecaprenyl phosphate = di-trans,octa-cis-undecaprenyl diphospho-N-acetyl-alpha-D-muramoyl-L-alanyl-D-glutamyl-meso-2,6-diaminopimeloyl-D-alanyl-D-alanine + UMP. It participates in cell wall biogenesis; peptidoglycan biosynthesis. Its function is as follows. Catalyzes the initial step of the lipid cycle reactions in the biosynthesis of the cell wall peptidoglycan: transfers peptidoglycan precursor phospho-MurNAc-pentapeptide from UDP-MurNAc-pentapeptide onto the lipid carrier undecaprenyl phosphate, yielding undecaprenyl-pyrophosphoryl-MurNAc-pentapeptide, known as lipid I. In Rippkaea orientalis (strain PCC 8801 / RF-1) (Cyanothece sp. (strain PCC 8801)), this protein is Phospho-N-acetylmuramoyl-pentapeptide-transferase.